The sequence spans 355 residues: Cyanide hydratase (355 aa).

Positions tyrosine 6–asparagine 286 constitute a CN hydrolase domain. Glutamate 46 (proton acceptor) is an active-site residue. Lysine 128 is an active-site residue. The active-site Nucleophile is the cysteine 163.

It belongs to the carbon-nitrogen hydrolase superfamily. Nitrilase family. Oligomer of dimers, forming left-handed helical fibers.

The catalysed reaction is formamide = hydrogen cyanide + H2O. Its function is as follows. Catalyzes the hydration of cyanide to formamide. Degradation of cyanide may be important for plant pathogenic fungi in infection of cyanogenic plants. Also has low but significant nitrilase activity with acetonitrile, propionitrile and benzonitrile. This Gibberella baccata (Fusarium lateritium) protein is Cyanide hydratase.